Here is a 768-residue protein sequence, read N- to C-terminus: DNA replication licensing factor MCM3 homolog 1 (768 aa).

One can recognise an MCM domain in the interval 290 to 497 (TFDLLGNSLA…IDRQISEHVA (208 aa)). 340–347 (GDPSVAKS) provides a ligand contact to ATP. An Arginine finger motif is present at residues 472–475 (SRFD). The disordered stretch occupies residues 662–687 (MKQQAEHDAGATGGTVDGHGSSGNDP). The segment covering 672-682 (ATGGTVDGHGS) has biased composition (gly residues).

The protein belongs to the MCM family.

The protein resides in the nucleus. The enzyme catalyses ATP + H2O = ADP + phosphate + H(+). In terms of biological role, acts as a factor that allows the DNA to undergo a single round of replication per cell cycle. Required for DNA replication and cell proliferation. May act as a component of the MCM complex which is the putative replicative helicase of the replication licensing system in eukaryotic cells. The sequence is that of DNA replication licensing factor MCM3 homolog 1 (ROA1) from Zea mays (Maize).